We begin with the raw amino-acid sequence, 155 residues long: Ribonuclease H (155 aa).

Positions 1–142 (MLKQVEIFTD…CDELARAAAM (142 aa)) constitute an RNase H type-1 domain. 4 residues coordinate Mg(2+): D10, E48, D70, and D134.

This sequence belongs to the RNase H family. Monomer. Mg(2+) is required as a cofactor.

It is found in the cytoplasm. It catalyses the reaction Endonucleolytic cleavage to 5'-phosphomonoester.. Functionally, endonuclease that specifically degrades the RNA of RNA-DNA hybrids. The sequence is that of Ribonuclease H from Escherichia coli (strain 55989 / EAEC).